Consider the following 183-residue polypeptide: MKGGKRVQPARPNRINREIRAQEVRLTGVDGEQIGIVSLNEALEKAEEAGVDLVEISPNAEPPVCRIMDYGKFLYEKSKSTKEQKEEQKVIQVKEIKFRPGTDDGDYQVKLRNLIRFLEDGDKAKITLRFRGPEMAHQQIGMEVLNPLRKDLCEDMDLAVVESFPTKIEGRQMIMVLAPKKKQ.

The protein belongs to the IF-3 family. Monomer.

It localises to the cytoplasm. In terms of biological role, IF-3 binds to the 30S ribosomal subunit and shifts the equilibrium between 70S ribosomes and their 50S and 30S subunits in favor of the free subunits, thus enhancing the availability of 30S subunits on which protein synthesis initiation begins. This is Translation initiation factor IF-3 from Serratia marcescens.